A 145-amino-acid chain; its full sequence is Large ribosomal subunit protein bL9 (145 aa).

This sequence belongs to the bacterial ribosomal protein bL9 family.

Functionally, binds to the 23S rRNA. In Mesomycoplasma hyopneumoniae (strain 232) (Mycoplasma hyopneumoniae), this protein is Large ribosomal subunit protein bL9.